The following is a 271-amino-acid chain: Phosphonoacetaldehyde hydrolase (271 aa).

Residue D12 is the Nucleophile of the active site. Mg(2+) contacts are provided by D12 and A14. K54 (schiff-base intermediate with substrate) is an active-site residue. Residue D188 coordinates Mg(2+).

Belongs to the HAD-like hydrolase superfamily. PhnX family. Homodimer. It depends on Mg(2+) as a cofactor.

It catalyses the reaction phosphonoacetaldehyde + H2O = acetaldehyde + phosphate + H(+). Involved in phosphonate degradation. The chain is Phosphonoacetaldehyde hydrolase from Aliivibrio salmonicida (strain LFI1238) (Vibrio salmonicida (strain LFI1238)).